A 168-amino-acid polypeptide reads, in one-letter code: uncharacterized protein (168 aa).

The chain crosses the membrane as a helical span at residues 24 to 44 (FIGIVLFLAVLIIGILILILF). Disordered regions lie at residues 69–92 (SPSS…NNSN) and 142–168 (NNNN…TKNI). Residues 142 to 157 (NNNNNNNNNPPTNISN) show a composition bias toward low complexity.

The protein resides in the membrane. This is an uncharacterized protein from Dictyostelium discoideum (Social amoeba).